The primary structure comprises 318 residues: Malonyl CoA-acyl carrier protein transacylase, mitochondrial (318 aa).

It belongs to the FabD family.

It is found in the mitochondrion. The enzyme catalyses holo-[ACP] + malonyl-CoA = malonyl-[ACP] + CoA. It functions in the pathway lipid metabolism; fatty acid biosynthesis. In terms of biological role, involved in biosynthesis of fatty acids in mitochondria. The chain is Malonyl CoA-acyl carrier protein transacylase, mitochondrial (mct1) from Schizosaccharomyces pombe (strain 972 / ATCC 24843) (Fission yeast).